Here is a 320-residue protein sequence, read N- to C-terminus: tRNA uridine(34) hydroxylase (320 aa).

Residues 125-221 enclose the Rhodanese domain; it reads KEKRPLLLDV…YGLKQGSEHW (97 aa). Cys-181 acts as the Cysteine persulfide intermediate in catalysis.

This sequence belongs to the TrhO family.

The catalysed reaction is uridine(34) in tRNA + AH2 + O2 = 5-hydroxyuridine(34) in tRNA + A + H2O. Catalyzes oxygen-dependent 5-hydroxyuridine (ho5U) modification at position 34 in tRNAs. The chain is tRNA uridine(34) hydroxylase from Protochlamydia amoebophila (strain UWE25).